Here is a 349-residue protein sequence, read N- to C-terminus: S-adenosylmethionine decarboxylase proenzyme 3 (349 aa).

Residues Glu-9 and Glu-12 contribute to the active site. Glu-68 is a binding site for substrate. The active-site Schiff-base intermediate with substrate; via pyruvic acid is the Ser-69. Ser-69 is modified (pyruvic acid (Ser); by autocatalysis). The Proton donor; for catalytic activity role is filled by Cys-83. Residues Ser-235 and His-248 each act as proton acceptor; for processing activity in the active site. Position 252 (Glu-252) interacts with substrate.

Belongs to the eukaryotic AdoMetDC family. Pyruvate serves as cofactor. Is synthesized initially as an inactive proenzyme. Formation of the active enzyme involves a self-maturation process in which the active site pyruvoyl group is generated from an internal serine residue via an autocatalytic post-translational modification. Two non-identical subunits are generated from the proenzyme in this reaction, and the pyruvate is formed at the N-terminus of the alpha chain, which is derived from the carboxyl end of the proenzyme. The post-translation cleavage follows an unusual pathway, termed non-hydrolytic serinolysis, in which the side chain hydroxyl group of the serine supplies its oxygen atom to form the C-terminus of the beta chain, while the remainder of the serine residue undergoes an oxidative deamination to produce ammonia and the pyruvoyl group blocking the N-terminus of the alpha chain.

The enzyme catalyses S-adenosyl-L-methionine + H(+) = S-adenosyl 3-(methylsulfanyl)propylamine + CO2. It participates in amine and polyamine biosynthesis; S-adenosylmethioninamine biosynthesis; S-adenosylmethioninamine from S-adenosyl-L-methionine: step 1/1. Essential for biosynthesis of the polyamines spermidine and spermine. Essential for polyamine homeostasis, and normal plant embryogenesis, growth and development. This is S-adenosylmethionine decarboxylase proenzyme 3 from Arabidopsis thaliana (Mouse-ear cress).